A 504-amino-acid polypeptide reads, in one-letter code: Putative F-box/FBD/LRR-repeat protein At3g59240 (504 aa).

The region spanning 7–60 is the F-box domain; the sequence is KDIISDLPEALICHLLSFVPTKEAALTSLLSEKWRYLFAFAPILDFDDSVWMQS. LRR repeat units lie at residues 69–95, 145–171, 173–198, 286–312, 329–354, 369–396, and 403–428; these read HRKFMDFVDRVLGLQGNSTLVRFSLNC, RIRTENCTIIDLEDVFLPKLKTLDLSS, WFRDGDTCLLKLISGCQVLEDLTMSD, TNLFMGISNVRILQLFSNALEVLTFCC, DKDVGWESLPALLKNCPNLETLVFKG, CLCKSSKDIRSCLSSSPVKVLKILKFGE, and DEEKQLELVKYFLETMPNLEQMILHY. The FBD domain occupies 382-427; it reads SSSPVKVLKILKFGEVASYFGDEEKQLELVKYFLETMPNLEQMILH.

This chain is Putative F-box/FBD/LRR-repeat protein At3g59240, found in Arabidopsis thaliana (Mouse-ear cress).